An 83-amino-acid chain; its full sequence is Salivary thrombin inhibitor anophelin (83 aa).

An N-terminal signal peptide occupies residues 1 to 22 (MANKLVLISLLCVVLVAKITQA). A disordered region spans residues 25–51 (QYAPGDEPSYDEDTDDSDKLVENDTSI). N-linked (GlcNAc...) asparagine glycosylation occurs at asparagine 47. Residues 54–83 (EDYAAIEASLSETFNTAADPGRRLGEGSKP) form a sufficient for host thrombin inhibition region. The interval 56–62 (YAAIEAS) is blocks exosite I of host thrombin. A disordered region spans residues 64–83 (SETFNTAADPGRRLGEGSKP). The tract at residues 72–75 (DPGR) is blocks active site cleft of host thrombin in a reverse direction compared to substrates. Residues 73–83 (PGRRLGEGSKP) show a composition bias toward basic and acidic residues.

This sequence belongs to the anophelin family. In terms of assembly, interacts with human F2 (thrombin); the interaction results in thrombin inhibition. As to expression, salivary gland (at protein level).

It localises to the secreted. Increasing concentration of NaCl decreases affinity for thrombin. Functionally, salivary protein with anticoagulant activity that inhibits host thrombin (F2); binds to the proteinase in a reverse orientation (opposite to substrates). Inhibits thrombin-induced platelet aggregation. The sequence is that of Salivary thrombin inhibitor anophelin from Anopheles albimanus (New world malaria mosquito).